Consider the following 143-residue polypeptide: uncharacterized protein (143 aa).

Residues 50–143 enclose the Rhodanese domain; it reads NKEDAVVVDL…GENLPLVRGK (94 aa). Position 91 is an N6-acetyllysine (K91).

This is an uncharacterized protein from Escherichia coli O6:H1 (strain CFT073 / ATCC 700928 / UPEC).